The chain runs to 339 residues: D-erythrose-4-phosphate dehydrogenase (339 aa).

11-12 (RI) serves as a coordination point for NAD(+). Residues 153-155 (SCT), R199, 212-213 (TK), and R235 contribute to the substrate site. C154 (nucleophile) is an active-site residue. N317 contacts NAD(+).

The protein belongs to the glyceraldehyde-3-phosphate dehydrogenase family. Epd subfamily. Homotetramer.

It is found in the cytoplasm. The catalysed reaction is D-erythrose 4-phosphate + NAD(+) + H2O = 4-phospho-D-erythronate + NADH + 2 H(+). Its pathway is cofactor biosynthesis; pyridoxine 5'-phosphate biosynthesis; pyridoxine 5'-phosphate from D-erythrose 4-phosphate: step 1/5. In terms of biological role, catalyzes the NAD-dependent conversion of D-erythrose 4-phosphate to 4-phosphoerythronate. This Shewanella halifaxensis (strain HAW-EB4) protein is D-erythrose-4-phosphate dehydrogenase.